The following is a 244-amino-acid chain: Neurogenin-1 (244 aa).

2 disordered regions span residues 1-27 (MPAPLETCISDLDCSSSNSSSDLSSFL) and 39-82 (LAST…ARVR). Positions 10 to 27 (SDLDCSSSNSSSDLSSFL) are enriched in low complexity. One can recognise a bHLH domain in the interval 93–145 (SRRVKANDRERNRMHNLNAALDALRSVLPSFPDDTKLTKIETLRFAYNYIWAL).

As to quaternary structure, efficient DNA binding requires dimerization with another bHLH protein. In terms of tissue distribution, expression restricted to the embryonic nervous system.

It localises to the nucleus. Acts as a transcriptional regulator. Involved in the initiation of neuronal differentiation. Activates transcription by binding to the E box (5'-CANNTG-3'). Associates with chromatin to enhancer regulatory elements in genes encoding key transcriptional regulators of neurogenesis. The chain is Neurogenin-1 (Neurog1) from Mus musculus (Mouse).